The sequence spans 299 residues: Acetyl-coenzyme A carboxylase carboxyl transferase subunit beta (299 aa).

The region spanning 25–294 (VWTKCTSCEQ…PFVEPELIQE (270 aa)) is the CoA carboxyltransferase N-terminal domain. Zn(2+) contacts are provided by C29, C32, C48, and C51. Residues 29-51 (CTSCEQVLYRDELKRHLEVCPKC) form a C4-type zinc finger.

The protein belongs to the AccD/PCCB family. As to quaternary structure, acetyl-CoA carboxylase is a heterohexamer composed of biotin carboxyl carrier protein (AccB), biotin carboxylase (AccC) and two subunits each of ACCase subunit alpha (AccA) and ACCase subunit beta (AccD). The cofactor is Zn(2+).

The protein localises to the cytoplasm. It carries out the reaction N(6)-carboxybiotinyl-L-lysyl-[protein] + acetyl-CoA = N(6)-biotinyl-L-lysyl-[protein] + malonyl-CoA. It functions in the pathway lipid metabolism; malonyl-CoA biosynthesis; malonyl-CoA from acetyl-CoA: step 1/1. Component of the acetyl coenzyme A carboxylase (ACC) complex. Biotin carboxylase (BC) catalyzes the carboxylation of biotin on its carrier protein (BCCP) and then the CO(2) group is transferred by the transcarboxylase to acetyl-CoA to form malonyl-CoA. The sequence is that of Acetyl-coenzyme A carboxylase carboxyl transferase subunit beta from Histophilus somni (strain 129Pt) (Haemophilus somnus).